The sequence spans 229 residues: Small ribosomal subunit protein uS3 (229 aa).

Residues 39–107 (VRQYLTEKLK…TAQINIAEIR (69 aa)) form the KH type-2 domain.

It belongs to the universal ribosomal protein uS3 family. Part of the 30S ribosomal subunit. Forms a tight complex with proteins S10 and S14.

Functionally, binds the lower part of the 30S subunit head. Binds mRNA in the 70S ribosome, positioning it for translation. The protein is Small ribosomal subunit protein uS3 of Shewanella frigidimarina (strain NCIMB 400).